We begin with the raw amino-acid sequence, 76 residues long: Brevinin-2ISb (76 aa).

A signal peptide spans 1–22; sequence MFTMKKSLLVLFFLGTISLSLC. The propeptide at 23–41 is removed in mature form; sequence QEERNADEEDGGEATEEEV. C70 and C76 are joined by a disulfide.

As to expression, expressed by the skin glands.

It localises to the secreted. Its function is as follows. Has antimicrobial activity against Gram-negative bacterium E.coli ATCC 8739 (MIC=12.5 ug), against Gram positive bacteria S.aureus ATCC 6538 (MIC=6.3 ug) and B.subtilis ATCC 6633 (MIC=25 ug). Has no activity against methicillin-resistant S.aureus ATCC 43300 (MIC= ug) and fungus C.albicans ATCC 90028. The protein is Brevinin-2ISb of Odorrana ishikawae (Ishikawa's frog).